A 265-amino-acid chain; its full sequence is Putative N(omega)-hydroxy-L-arginine synthase DcsA (265 aa).

It belongs to the DcsA family. It depends on heme as a cofactor.

In terms of biological role, involved in the biosynthesis of the antibiotic D-cycloserine (DCS), a cyclic structural analog of D-alanine, used as an antitubercular agent. Could catalyze the production of N(omega)-hydroxy-L-arginine (NHA) from L-arginine. This chain is Putative N(omega)-hydroxy-L-arginine synthase DcsA, found in Streptomyces lavendulae.